Reading from the N-terminus, the 233-residue chain is Orotidine 5'-phosphate decarboxylase (233 aa).

Substrate contacts are provided by residues Asp-9, Lys-31, 58–67 (DLKLHDIPNT), Thr-120, Arg-182, Gln-191, Gly-211, and Arg-212. Lys-60 functions as the Proton donor in the catalytic mechanism.

The protein belongs to the OMP decarboxylase family. Type 1 subfamily. In terms of assembly, homodimer.

It catalyses the reaction orotidine 5'-phosphate + H(+) = UMP + CO2. It participates in pyrimidine metabolism; UMP biosynthesis via de novo pathway; UMP from orotate: step 2/2. Catalyzes the decarboxylation of orotidine 5'-monophosphate (OMP) to uridine 5'-monophosphate (UMP). The protein is Orotidine 5'-phosphate decarboxylase of Listeria monocytogenes serovar 1/2a (strain ATCC BAA-679 / EGD-e).